The sequence spans 143 residues: AP-2 complex subunit sigma (143 aa).

This sequence belongs to the adaptor complexes small subunit family. Adaptor protein complex 2 (AP-2) is a heterotetramer composed of two large adaptins (alpha-type subunit apl3 and beta-type subunit apl1), a medium chain (mu-type subunit apm4) and a small adaptin (sigma-type subunit aps2).

It is found in the cell membrane. Its subcellular location is the membrane. It localises to the coated pit. In terms of biological role, component of the adaptor complexes which link clathrin to receptors in coated vesicles. Clathrin-associated protein complexes are believed to interact with the cytoplasmic tails of membrane proteins, leading to their selection and concentration. The polypeptide is AP-2 complex subunit sigma (aps2) (Schizosaccharomyces pombe (strain 972 / ATCC 24843) (Fission yeast)).